The following is a 187-amino-acid chain: Flavin prenyltransferase UbiX (187 aa).

Residues 9-11 (GAS), Ser-34, and Arg-123 contribute to the FMN site. Tyr-153 and Lys-169 together coordinate dimethylallyl phosphate.

This sequence belongs to the UbiX/PAD1 family.

The enzyme catalyses dimethylallyl phosphate + FMNH2 = prenylated FMNH2 + phosphate. Flavin prenyltransferase that catalyzes the synthesis of the prenylated FMN cofactor (prenyl-FMN) for 4-hydroxy-3-polyprenylbenzoic acid decarboxylase UbiD. The prenyltransferase is metal-independent and links a dimethylallyl moiety from dimethylallyl monophosphate (DMAP) to the flavin N5 and C6 atoms of FMN. The sequence is that of Flavin prenyltransferase UbiX from Helicobacter pylori (strain ATCC 700392 / 26695) (Campylobacter pylori).